The sequence spans 338 residues: MNLTRAGARLQVLLGHLGRPSAPTIVAQPVSGLASPASFQPEQFQYTLDNNVLTLEQRKFYEENGFLVIKNLVSDDDIQRFRAEFERICREEVKPPGIVIMRDVALAKQDYMPSDRMVSKIQDFQEDEELFRYCLLPEILKYVECFTGPNIMALHGMLINKPPDVGKKTSRHPLHQDLHYFPFRPSNLIVCAWTAMEHIDRNNGCLVVLPGTHKGTLKPHDYPKWEGGVNKMYHGIQDYDPNSPRVHLVMEKGDTVFFHPLLIHGSGRNKTQGFRKAISCHFGSSDCQCIDVSGTSQENIAREVVEMAEKKYGFQGVMDFKDTWIFRSRLVKGERINI.

Residues 1 to 30 (MNLTRAGARLQVLLGHLGRPSAPTIVAQPV) constitute a peroxisome transit peptide. An N6-succinyllysine mark is found at lysine 59 and lysine 108. 2-oxoglutarate-binding positions include lysine 120, methionine 157, 175 to 177 (HQD), and tryptophan 193. Fe cation contacts are provided by histidine 175 and aspartate 177. N6-succinyllysine is present on residues lysine 231 and lysine 252. Fe cation is bound at residue histidine 264. Positions 266 and 275 each coordinate 2-oxoglutarate.

This sequence belongs to the PhyH family. Interacts with FKBP52. Interacts with PHYHIP. Fe cation is required as a cofactor. It depends on L-ascorbate as a cofactor. Requires ATP as cofactor. Mg(2+) serves as cofactor. Ubiquitously expressed in all tissues with significant levels detected in the embryonic and neonatal heart and liver. In the adult, significant levels are detected in the liver, kidney, heart, gut, brain and aorta.

It is found in the peroxisome. It carries out the reaction phytanoyl-CoA + 2-oxoglutarate + O2 = 2-hydroxyphytanoyl-CoA + succinate + CO2. The catalysed reaction is 3-methylhexadecanoyl-CoA + 2-oxoglutarate + O2 = 2-hydroxy-3-methylhexadecanoyl-CoA + succinate + CO2. It catalyses the reaction hexadecanoyl-CoA + 2-oxoglutarate + O2 = 2-hydroxyhexadecanoyl-CoA + succinate + CO2. The enzyme catalyses octanoyl-CoA + 2-oxoglutarate + O2 = 2-hydroxyoctanoyl-CoA + succinate + CO2. It carries out the reaction decanoyl-CoA + 2-oxoglutarate + O2 = 2-hydroxydecanoyl-CoA + succinate + CO2. The catalysed reaction is 3-methylbutanoyl-CoA + 2-oxoglutarate + O2 = 2-hydroxy-3-methylbutanoyl-CoA + succinate + CO2. It catalyses the reaction heptadecanoyl-CoA + 2-oxoglutarate + O2 = 2-hydroxyheptadecanoyl-CoA + succinate + CO2. The enzyme catalyses eicosanoyl-CoA + 2-oxoglutarate + O2 = 2-hydroxyeicosanoyl-CoA + succinate + CO2. It carries out the reaction octadecanoyl-CoA + 2-oxoglutarate + O2 = 2-hydroxyoctadecanoyl-CoA + succinate + CO2. The catalysed reaction is dodecanoyl-CoA + 2-oxoglutarate + O2 = 2-hydroxydodecanoyl-CoA + succinate + CO2. It catalyses the reaction tetradecanoyl-CoA + 2-oxoglutarate + O2 = 2-hydroxytetradecanoyl-CoA + succinate + CO2. The enzyme catalyses hexanoyl-CoA + 2-oxoglutarate + O2 = 2-hydroxyhexanoyl-CoA + succinate + CO2. It carries out the reaction butanoyl-CoA + 2-oxoglutarate + O2 = 2-hydroxybutanoyl-CoA + succinate + CO2. The catalysed reaction is 3-methylnonanoyl-CoA + 2-oxoglutarate + O2 = 2-hydroxy-3-methylnonanoyl-CoA + succinate + CO2. It catalyses the reaction 3-methylundecanoyl-CoA + 2-oxoglutarate + O2 = 2-hydroxy-3-methylundecanoyl-CoA + succinate + CO2. The enzyme catalyses 3-methyldodecanoyl-CoA + 2-oxoglutarate + O2 = 2-hydroxy-3-methyldodecanoyl-CoA + succinate + CO2. It functions in the pathway lipid metabolism; fatty acid metabolism. Functionally, catalyzes the 2-hydroxylation of not only racemic phytanoyl-CoA and the isomers of 3-methylhexadecanoyl-CoA, but also a variety of other mono-branched 3-methylacyl-CoA esters (with a chain length of at least seven carbon atoms) and straight-chain acyl-CoA esters (with a chain length longer than four carbon atoms). Does not hydroxylate long and very long straight chain acyl-CoAs or 2-methyl-and 4-methyl-branched acyl-CoAs. This is Phytanoyl-CoA dioxygenase, peroxisomal (Phyh) from Mus musculus (Mouse).